The sequence spans 250 residues: 2,5-dichloro-2,5-cyclohexadiene-1,4-diol dehydrogenase (250 aa).

9–34 (IIVTGGGSGIGRATVELLVASGANVA) is a binding site for NAD(+). Residue Ser-141 participates in substrate binding. Tyr-154 functions as the Proton acceptor in the catalytic mechanism.

This sequence belongs to the short-chain dehydrogenases/reductases (SDR) family.

The enzyme catalyses 2,5-dichlorocyclohexa-2,5-dien-1,4-diol + NAD(+) = 2,5-dichlorohydroquinone + NADH + H(+). It functions in the pathway xenobiotic degradation; gamma-hexachlorocyclohexane degradation. Its function is as follows. Catalyzes the dehydrogenation of 2,5-dichloro-2,5-cyclohexadiene-1,4-diol (2,5-DDOL) to 2,5-dichlorohydroquinone (2,5-DCHQ), a step in the degradation of gamma-hexachlorocyclohexane (gamma-HCH or lindane). The chain is 2,5-dichloro-2,5-cyclohexadiene-1,4-diol dehydrogenase from Sphingobium indicum (strain DSM 16412 / CCM 7286 / MTCC 6364 / B90A).